The sequence spans 120 residues: Seripauperin-4 (120 aa).

A helical transmembrane segment spans residues 7 to 24 (IAAGVAAIAATASATTTI).

The protein belongs to the SRP1/TIP1 family. Seripauperin subfamily.

It is found in the membrane. The protein is Seripauperin-4 (PAU4) of Saccharomyces cerevisiae (strain ATCC 204508 / S288c) (Baker's yeast).